The sequence spans 334 residues: Proline-serine-threonine phosphatase-interacting protein 2 (334 aa).

One can recognise an F-BAR domain in the interval serine 4–aspartate 264. Residues glycine 66–asparagine 166 are a coiled coil. The disordered stretch occupies residues valine 295–asparagine 322. A phosphotyrosine mark is found at tyrosine 323 and tyrosine 329.

Post-translationally, phosphorylated on tyrosine.

The protein localises to the cytoplasm. It localises to the membrane. Its function is as follows. Binds to F-actin. May be involved in regulation of the actin cytoskeleton. This chain is Proline-serine-threonine phosphatase-interacting protein 2 (PSTPIP2), found in Homo sapiens (Human).